Here is a 719-residue protein sequence, read N- to C-terminus: Polyphosphate kinase (719 aa).

Position 47 (N47) interacts with ATP. The Mg(2+) site is built by R377 and R407. H437 (phosphohistidine intermediate) is an active-site residue. The ATP site is built by Y470, R566, and H594.

Belongs to the polyphosphate kinase 1 (PPK1) family. The cofactor is Mg(2+). An intermediate of this reaction is the autophosphorylated ppk in which a phosphate is covalently linked to a histidine residue through a N-P bond.

It catalyses the reaction [phosphate](n) + ATP = [phosphate](n+1) + ADP. Its function is as follows. Catalyzes the reversible transfer of the terminal phosphate of ATP to form a long-chain polyphosphate (polyP). This Exiguobacterium sibiricum (strain DSM 17290 / CCUG 55495 / CIP 109462 / JCM 13490 / 255-15) protein is Polyphosphate kinase.